Consider the following 617-residue polypeptide: UvrABC system protein C (617 aa).

Residues 22-100 enclose the GIY-YIG domain; it reads KLPGVYRFFD…IKALSPKYNI (79 aa). A UVR domain is found at 209-244; sequence DELTRTLQHKMQTAAANLQFEEAARYRDQIQALGIM.

It belongs to the UvrC family. In terms of assembly, interacts with UvrB in an incision complex.

Its subcellular location is the cytoplasm. The UvrABC repair system catalyzes the recognition and processing of DNA lesions. UvrC both incises the 5' and 3' sides of the lesion. The N-terminal half is responsible for the 3' incision and the C-terminal half is responsible for the 5' incision. The polypeptide is UvrABC system protein C (Neisseria meningitidis serogroup A / serotype 4A (strain DSM 15465 / Z2491)).